Here is a 318-residue protein sequence, read N- to C-terminus: Very-long-chain 3-oxoacyl-CoA reductase-B (318 aa).

Residues 15–35 form a helical membrane-spanning segment; it reads FWYLGVVAATWWGLRAAWCLL. Residue 54 to 83 participates in NADP(+) binding; that stretch reads GKWAVVTGATDGIGKAYAEELARRGMNIVL. 2 helical membrane passes run 187–207 and 281–301; these read GVVL…LTVY and AITG…SMGM. S194 is a substrate binding site. Y207 serves as the catalytic Proton acceptor.

It belongs to the short-chain dehydrogenases/reductases (SDR) family. 17-beta-HSD 3 subfamily.

It is found in the endoplasmic reticulum membrane. The enzyme catalyses a very-long-chain (3R)-3-hydroxyacyl-CoA + NADP(+) = a very-long-chain 3-oxoacyl-CoA + NADPH + H(+). It carries out the reaction 17beta-estradiol + NAD(+) = estrone + NADH + H(+). It catalyses the reaction 17beta-estradiol + NADP(+) = estrone + NADPH + H(+). The protein operates within lipid metabolism; fatty acid biosynthesis. Its pathway is steroid biosynthesis; estrogen biosynthesis. Catalyzes the second of the four reactions of the long-chain fatty acids elongation cycle. This endoplasmic reticulum-bound enzymatic process, allows the addition of two carbons to the chain of long- and very long-chain fatty acids/VLCFAs per cycle. This enzyme has a 3-ketoacyl-CoA reductase activity, reducing 3-ketoacyl-CoA to 3-hydroxyacyl-CoA, within each cycle of fatty acid elongation. Thereby, it may participate in the production of VLCFAs of different chain lengths that are involved in multiple biological processes as precursors of membrane lipids and lipid mediators. May also catalyze the transformation of estrone (E1) into estradiol (E2) and play a role in estrogen formation. The protein is Very-long-chain 3-oxoacyl-CoA reductase-B (hsd17b12-b) of Xenopus laevis (African clawed frog).